Reading from the N-terminus, the 260-residue chain is tRNA pseudouridine synthase A (260 aa).

Aspartate 51 (nucleophile) is an active-site residue. Tyrosine 109 is a binding site for substrate.

This sequence belongs to the tRNA pseudouridine synthase TruA family. Homodimer.

The catalysed reaction is uridine(38/39/40) in tRNA = pseudouridine(38/39/40) in tRNA. Functionally, formation of pseudouridine at positions 38, 39 and 40 in the anticodon stem and loop of transfer RNAs. This is tRNA pseudouridine synthase A from Albidiferax ferrireducens (strain ATCC BAA-621 / DSM 15236 / T118) (Rhodoferax ferrireducens).